Here is a 792-residue protein sequence, read N- to C-terminus: Leucine--tRNA ligase (792 aa).

A 'HIGH' region motif is present at residues 39–50; sequence PYPSAAGLHLGH. A 'KMSKS' region motif is present at residues 569–573; that stretch reads KMSKS. An ATP-binding site is contributed by Lys-572.

This sequence belongs to the class-I aminoacyl-tRNA synthetase family.

The protein localises to the cytoplasm. The enzyme catalyses tRNA(Leu) + L-leucine + ATP = L-leucyl-tRNA(Leu) + AMP + diphosphate. The polypeptide is Leucine--tRNA ligase (Mycoplasma genitalium (strain ATCC 33530 / DSM 19775 / NCTC 10195 / G37) (Mycoplasmoides genitalium)).